A 411-amino-acid polypeptide reads, in one-letter code: MFDALVIGSGPAGLAIAAELAQRGLKVQGLSPVDPFHPWENTYGIWGPELDSLGLEHLFGHRWSNCVSYFGEAPVQHQYNYGLFDRAQLQQHWLRQCEQGGLQWQLGKAAAIAHDSHHSCVTTAAGQELQARLVVDTTGHQAAFIQRPHSDAIAYQAAYGIIGQFSQPPIEPHQFVLMDYRSDHLSPEERQLPPTFLYAMDLGNDVYFVEETSLAACPAIPYDRLKQRLYQRLATRGVTVQVIQHEEYCLFPMNLPLPDLTQSVVGFGGAASMVHPASGYMVGALLRRAPDLANAIAAGLNASSSLTTAELATQAWRGLWPTEKIRKHYIYQFGLEKLMRFSEAQLNHHFQTFFGLPKEQWYGFLTNTLSLPELIQAMLRLFAQAPNDVRWGLMEQQGRELQLFWQAIAAR.

Position 4–32 (4–32 (ALVIGSGPAGLAIAAELAQRGLKVQGLSP)) interacts with NAD(+).

Belongs to the lycopene cyclase family. It depends on FAD as a cofactor.

The enzyme catalyses a carotenoid psi-end group = a carotenoid beta-end derivative. It carries out the reaction all-trans-lycopene = gamma-carotene. The catalysed reaction is gamma-carotene = all-trans-beta-carotene. It catalyses the reaction all-trans-neurosporene = beta-zeacarotene. It functions in the pathway carotenoid biosynthesis; beta-carotene biosynthesis. Its pathway is carotenoid biosynthesis; beta-zeacarotene biosynthesis. Its activity is regulated as follows. Inhibited by the bleaching herbicide 2-(4-methylphenoxy)triethylamine hydrochloride (MPTA). Functionally, catalyzes the double cyclization reaction which converts lycopene to beta-carotene. It also converts neurosporene to the monocyclic beta-zeacarotene but does not cyclize zeta-carotene. The polypeptide is Lycopene beta cyclase (Synechococcus elongatus (strain ATCC 33912 / PCC 7942 / FACHB-805) (Anacystis nidulans R2)).